Consider the following 176-residue polypeptide: Phosphopantetheine adenylyltransferase (176 aa).

Ser-8 contributes to the substrate binding site. Residues 8–9 (SF) and His-16 contribute to the ATP site. Residues Lys-40, Thr-72, and Arg-86 each contribute to the substrate site. ATP is bound by residues 87–89 (GLR), Glu-97, and 122–128 (YSFLSSS).

This sequence belongs to the bacterial CoaD family. Homohexamer. The cofactor is Mg(2+).

The protein resides in the cytoplasm. It catalyses the reaction (R)-4'-phosphopantetheine + ATP + H(+) = 3'-dephospho-CoA + diphosphate. It functions in the pathway cofactor biosynthesis; coenzyme A biosynthesis; CoA from (R)-pantothenate: step 4/5. Reversibly transfers an adenylyl group from ATP to 4'-phosphopantetheine, yielding dephospho-CoA (dPCoA) and pyrophosphate. In Acaryochloris marina (strain MBIC 11017), this protein is Phosphopantetheine adenylyltransferase.